The primary structure comprises 213 residues: Glutathione S-transferase APIC (213 aa).

In terms of domain architecture, GST N-terminal spans 1-82 (MAIKVHGSPM…YIAHVYADNG (82 aa)). Glutathione-binding positions include Ser-11, 12 to 13 (TA), 40 to 41 (HK), 53 to 54 (QV), and 66 to 67 (ES). The GST C-terminal domain maps to 89-213 (DPKKMPIMSV…WVKGLEKLQK (125 aa)).

The protein belongs to the GST superfamily. Phi family.

It catalyses the reaction RX + glutathione = an S-substituted glutathione + a halide anion + H(+). Functionally, conjugation of reduced glutathione to a wide number of exogenous and endogenous hydrophobic electrophiles. The protein is Glutathione S-transferase APIC of Nicotiana tabacum (Common tobacco).